Here is a 275-residue protein sequence, read N- to C-terminus: MIQFTKMHGLGNDFMVVDGVTQNVFFSPEQIRRLADRNFGIGFDQLLLVEPPYDPDLDFHYRIFNADGSEVEQCGNGARCFARFVRNKGLTNKNKIRVSTSSGKMTLRLERDGTVTVNMGVPILEPSLIPFKAKKPEKTYLLQTAQQTFLCGAASMGNPHCVLDVEDVASAAVAEIGALLTKHERFPRGVNVGFMQVINSGHIKLRVYERGAAETLACGTGACAAVVVGQIQGKLDQQVRVDLPGGTLTINWEGEGKPLWMTGPAQHVYDGQIQL.

Substrate is bound by residues N12, Q45, and N65. C74 functions as the Proton donor in the catalytic mechanism. Residues 75–76, N158, N191, and 209–210 contribute to the substrate site; these read GN and ER. Catalysis depends on C218, which acts as the Proton acceptor. Substrate is bound at residue 219–220; that stretch reads GT.

This sequence belongs to the diaminopimelate epimerase family. Homodimer.

It is found in the cytoplasm. It carries out the reaction (2S,6S)-2,6-diaminopimelate = meso-2,6-diaminopimelate. It functions in the pathway amino-acid biosynthesis; L-lysine biosynthesis via DAP pathway; DL-2,6-diaminopimelate from LL-2,6-diaminopimelate: step 1/1. Functionally, catalyzes the stereoinversion of LL-2,6-diaminopimelate (L,L-DAP) to meso-diaminopimelate (meso-DAP), a precursor of L-lysine and an essential component of the bacterial peptidoglycan. The polypeptide is Diaminopimelate epimerase (Shewanella putrefaciens (strain CN-32 / ATCC BAA-453)).